The chain runs to 330 residues: Protein RfbI (330 aa).

A 2Fe-2S ferredoxin-type domain is found at 3–89 (HIIKIFPSNI…ELNAHFFPEL (87 aa)). Cys-37, Cys-42, and Cys-45 together coordinate [2Fe-2S] cluster. The FAD-binding FR-type domain maps to 94–192 (KKIVPCKVNS…EGPCGTFFIR (99 aa)).

It depends on [2Fe-2S] cluster as a cofactor.

The protein operates within bacterial outer membrane biogenesis; LPS O-antigen biosynthesis. In Salmonella typhimurium (strain LT2 / SGSC1412 / ATCC 700720), this protein is Protein RfbI (rfbI).